We begin with the raw amino-acid sequence, 390 residues long: Homeobox protein Meis1 (390 aa).

An MEIS N-terminal domain is found at 108–191 (GGDVCSSESF…PIDLVIDDRD (84 aa)). A compositionally biased stretch (basic and acidic residues) spans 188–202 (DDRDGGSKSDSEDLT). The interval 188 to 279 (DDRDGGSKSD…KKRNKGRGIF (92 aa)) is disordered. Residues 272–334 (RNKGRGIFPK…NARRRIVQPM (63 aa)) constitute a DNA-binding region (homeobox; TALE-type). The segment at 299–329 (YPSEEQKKQLAQDTGLTILQVNNWFINARRR) is interaction with DNA.

This sequence belongs to the TALE/MEIS homeobox family. As to quaternary structure, interacts with pbx1 isoform b. In the embryo, displays a broad expression pattern with high levels observed in tissues of neural cell fate such as midbrain, hindbrain, dorsal portion of the neural tube, and neural crest-derived branchial arches. Widely expressed in the adult with highest levels in brain and spleen.

The protein localises to the cytoplasm. Its subcellular location is the nucleus. In terms of biological role, induces expression of a number of neural crest marker genes as part of a heterodimer with isoform b of pbx1, to specify neural crest cell fate. Binds to a highly conserved region in the promoter of the neural crest marker gene zic3. This Xenopus laevis (African clawed frog) protein is Homeobox protein Meis1 (meis1).